A 244-amino-acid chain; its full sequence is Protein YIPF4 (244 aa).

At 1–113 the chain is on the cytoplasmic side; sequence MQPPGPPPAY…FNRQVVRDNP (113 aa). The chain crosses the membrane as a helical span at residues 114-134; that stretch reads DFWGPLAVVLFFSMISLYGQF. The Extracellular segment spans residues 135 to 138; sequence RVVS. A helical membrane pass occupies residues 139 to 159; that stretch reads WIITIWIFGSLTIFLLARVLG. Residues 160 to 166 are Cytoplasmic-facing; that stretch reads GEVAYGQ. Residues 167-187 form a helical membrane-spanning segment; the sequence is VLGVIGYSLLPLIVIAPVLLV. Residues 188 to 195 are Extracellular-facing; sequence VGSFEVVS. A helical membrane pass occupies residues 196–216; sequence TLIKLFGVFWAAYSAASLLVG. The Cytoplasmic segment spans residues 217–223; the sequence is EEFKTKK. A helical transmembrane segment spans residues 224–244; that stretch reads PLLIYPIFLLYIYFLSLYTGV.

The protein belongs to the YIP1 family. Interacts with YIPF3 and YIPF5. In terms of assembly, (Microbial infection) Interacts with human papillomavirus (HPV) E5 proteins. As to expression, expressed in keratinocytes (at protein level).

The protein localises to the golgi apparatus. It is found in the cis-Golgi network membrane. In terms of biological role, involved in the maintenance of the Golgi structure. The chain is Protein YIPF4 (YIPF4) from Homo sapiens (Human).